The sequence spans 267 residues: Acyl-[acyl-carrier-protein]--UDP-N-acetylglucosamine O-acyltransferase (267 aa).

The protein belongs to the transferase hexapeptide repeat family. LpxA subfamily. As to quaternary structure, homotrimer.

It is found in the cytoplasm. It catalyses the reaction a (3R)-hydroxyacyl-[ACP] + UDP-N-acetyl-alpha-D-glucosamine = a UDP-3-O-[(3R)-3-hydroxyacyl]-N-acetyl-alpha-D-glucosamine + holo-[ACP]. Its pathway is glycolipid biosynthesis; lipid IV(A) biosynthesis; lipid IV(A) from (3R)-3-hydroxytetradecanoyl-[acyl-carrier-protein] and UDP-N-acetyl-alpha-D-glucosamine: step 1/6. Its function is as follows. Involved in the biosynthesis of lipid A, a phosphorylated glycolipid that anchors the lipopolysaccharide to the outer membrane of the cell. This Cupriavidus taiwanensis (strain DSM 17343 / BCRC 17206 / CCUG 44338 / CIP 107171 / LMG 19424 / R1) (Ralstonia taiwanensis (strain LMG 19424)) protein is Acyl-[acyl-carrier-protein]--UDP-N-acetylglucosamine O-acyltransferase.